Here is a 209-residue protein sequence, read N- to C-terminus: MAAKQERWRELAEVKRELAERDWFPATSGNLSIKVTDEPLTFLVTASGKDKRKETVEDFLLVDQNGEPAESGHSLKPSAETLLHTHLYNKTNAGCCLHVHTVNNNVISELYGDQKKITFKGQEIIKALGLWEENAEVTVPIIENPAHIPTLAALFAEEISEDSGAVLIRNHGITAWGKTAFEAKRVLEAYEFLFSYHLKLKTLEHQLVK.

His-98 and His-100 together coordinate Zn(2+).

The protein belongs to the aldolase class II family. MtnB subfamily. Homotetramer. Zn(2+) serves as cofactor.

It carries out the reaction 5-(methylsulfanyl)-D-ribulose 1-phosphate = 5-methylsulfanyl-2,3-dioxopentyl phosphate + H2O. The protein operates within amino-acid biosynthesis; L-methionine biosynthesis via salvage pathway; L-methionine from S-methyl-5-thio-alpha-D-ribose 1-phosphate: step 2/6. In terms of biological role, catalyzes the dehydration of methylthioribulose-1-phosphate (MTRu-1-P) into 2,3-diketo-5-methylthiopentyl-1-phosphate (DK-MTP-1-P). In Bacillus subtilis (strain 168), this protein is Methylthioribulose-1-phosphate dehydratase (mtnB).